Consider the following 713-residue polypeptide: Metal transporter CNNM3 (713 aa).

Residues 7–29 traverse the membrane as a helical segment; the sequence is AVVGWLGWVLAAFCLGSTAGEAA. N-linked (GlcNAc...) asparagine glycosylation is present at Asn-73. The CNNM transmembrane domain maps to 136–314; the sequence is EAAPPWALGL…DPYSDLSKGV (179 aa). A run of 4 helical transmembrane segments spans residues 137–157, 199–219, 227–247, and 267–287; these read AAPP…AAVA, CALG…AVLL, AVPA…VLPA, and LAVL…ELAA. 2 consecutive CBS domains span residues 324-385 and 392-458; these read LTPL…CTPL and YNHP…ILDE. Residues 664–713 are disordered; that stretch reads LPPSPENAELQAIPGSQTRLLGDKSRETAGSTNSRPSIPVEESPGRNPGV. Residues Ser-667 and Ser-706 each carry the phosphoserine modification.

The protein belongs to the ACDP family. Widely expressed with highest levels in brain, kidney, liver, lung and heart.

Its subcellular location is the cell membrane. Its function is as follows. Probable metal transporter. The protein is Metal transporter CNNM3 (Cnnm3) of Mus musculus (Mouse).